A 210-amino-acid chain; its full sequence is Small ribosomal subunit protein uS3 (210 aa).

Positions 17–86 (IDEFLEKELR…NPQIEVEEIK (70 aa)) constitute a KH type-2 domain.

It belongs to the universal ribosomal protein uS3 family. As to quaternary structure, part of the 30S ribosomal subunit.

In terms of biological role, binds the lower part of the 30S subunit head. The protein is Small ribosomal subunit protein uS3 of Pyrococcus furiosus (strain ATCC 43587 / DSM 3638 / JCM 8422 / Vc1).